The primary structure comprises 86 residues: uncharacterized protein (86 aa).

This is an uncharacterized protein from Haemophilus phage HP1 (strain HP1c1) (Bacteriophage HP1).